A 799-amino-acid polypeptide reads, in one-letter code: Ribosome biogenesis protein BOP1 homolog (799 aa).

Residues 1–171 (MPRRVRAQKR…DDTSDEEHSL (171 aa)) form a disordered region. Acidic residues predominate over residues 58–69 (SESDVTDDEQID). Over residues 70–81 (EEARQADRDLLK) the composition is skewed to basic and acidic residues. Residues 93 to 121 (DPSDADNDDDDDEEEAASDDDDEEEDAEP) are compositionally biased toward acidic residues. Low complexity predominate over residues 122–132 (SSDSSNEASDA). WD repeat units follow at residues 457–498 (GHKA…RVVT), 500–538 (DAEV…AAID), 584–626 (PHHA…TQHP), 629–669 (KRNR…KKLL), 670–709 (TGVR…KPYK), 713–752 (YHKY…DLGQ), and 769–799 (SDGM…KLHV).

Belongs to the WD repeat BOP1/ERB1 family.

Its subcellular location is the nucleus. It is found in the nucleolus. It localises to the nucleoplasm. Functionally, required for maturation of ribosomal RNAs and formation of the large ribosomal subunit. The protein is Ribosome biogenesis protein BOP1 homolog of Monosiga brevicollis (Choanoflagellate).